We begin with the raw amino-acid sequence, 272 residues long: Putative bark agglutinin LECRPA3 (272 aa).

A signal peptide spans 1–29 (PFNPETVYALLAMLISFFVLLASARKENS). N-linked (GlcNAc...) asparagine glycosylation is found at asparagine 36, asparagine 39, and asparagine 65. Residues glutamate 150 and aspartate 152 each coordinate Mn(2+). The Ca(2+) site is built by aspartate 152, tyrosine 154, asparagine 156, and aspartate 159. Positions 159 and 164 each coordinate Mn(2+).

It belongs to the leguminous lectin family. In terms of assembly, homotetramer. Weak expression in bark. The lectin accumulates in the inner bark in autumn.

Bark lectins are storage proteins that probably maintain stocks of nitrogen during dormant period. Self-aggregatable molecules that can bind their own carbohydrate side chains. They could also play a role in the plant's defense against phytophagous invertebrates or herbivorous higher animals. This Robinia pseudoacacia (Black locust) protein is Putative bark agglutinin LECRPA3.